The following is a 235-amino-acid chain: Carbohydrate deacetylase (235 aa).

Residues His-61 and His-124 each coordinate Mg(2+).

This sequence belongs to the YdjC deacetylase family. It depends on Mg(2+) as a cofactor.

In terms of biological role, probably catalyzes the deacetylation of acetylated carbohydrates an important step in the degradation of oligosaccharides. In Bacillus cereus (strain B4264), this protein is Carbohydrate deacetylase.